The following is a 734-amino-acid chain: Polyribonucleotide nucleotidyltransferase (734 aa).

Mg(2+)-binding residues include Asp505 and Asp511. A KH domain is found at 572-631; that stretch reads PKLTTIQIPVDAIGMVIGKGGETIRSITEETGAEINIEDDGTVTIASASGEGASAALETI. An S1 motif domain is found at 641–715; the sequence is GTVYSGKVRD…GKTRFALSIK (75 aa).

Belongs to the polyribonucleotide nucleotidyltransferase family. The cofactor is Mg(2+).

The protein localises to the cytoplasm. It carries out the reaction RNA(n+1) + phosphate = RNA(n) + a ribonucleoside 5'-diphosphate. Functionally, involved in mRNA degradation. Catalyzes the phosphorolysis of single-stranded polyribonucleotides processively in the 3'- to 5'-direction. In Prosthecochloris aestuarii (strain DSM 271 / SK 413), this protein is Polyribonucleotide nucleotidyltransferase.